A 578-amino-acid chain; its full sequence is GRAM domain-containing protein 4 (578 aa).

Residues 83 to 135 are a coiled coil; that stretch reads HLEIALLEKHFLQEELRKLREETNIDTLKQELEKERQRRTELEQKITDIAKTR. The tract at residues 132–157 is disordered; sequence AKTRTDESATQQLSKGPSQTNGADKQ. The segment covering 139-154 has biased composition (polar residues); the sequence is SATQQLSKGPSQTNGA. The next 3 membrane-spanning stretches (helical) occupy residues 236 to 256, 334 to 354, and 356 to 376; these read IAFI…MFLF, MTQK…FFHY, and TIGL…DFIF. Residues 446–524 form the GRAM domain; that stretch reads SSFHEIFSLL…TDITDIQKYK (79 aa).

The protein localises to the mitochondrion membrane. The protein resides in the endoplasmic reticulum membrane. In terms of biological role, plays a role as a mediator of e2f1-induced apoptosis in the absence of p53/TP53. This Xenopus laevis (African clawed frog) protein is GRAM domain-containing protein 4 (gramd4).